The sequence spans 958 residues: Transportin MOS14 (958 aa).

One can recognise an Importin N-terminal domain in the interval 26–93 (ADRWLQNFQG…RQSLTTLLKK (68 aa)).

It belongs to the importin beta family. Interacts with RS2Z33, RSZ21, RS31A, SR34 and RAN1.

It is found in the nucleus. Functionally, functions as a nuclear import receptor for serine-arginine rich (SR) proteins. Regulates nuclear import of SR proteins that are required for proper splicing of the two resistance (R) genes SNC1 and RPS4, a crucial step for their functions in plant immunity. The chain is Transportin MOS14 from Arabidopsis thaliana (Mouse-ear cress).